The sequence spans 276 residues: 28 kDa ribonucleoprotein, chloroplastic (276 aa).

Residues 1–57 (MATNGCLISLPPFFTTTKSISSYPFLSTQLKPISLSSSLPTLLSLNKRTTQFPTFVS) constitute a chloroplast transit peptide. RRM domains lie at 97–175 (AKLF…KAAP) and 191–269 (YRIY…AAEE).

It localises to the plastid. The protein resides in the chloroplast. Functionally, probably involved in the 3'-end processing of chloroplast mRNA's. The polypeptide is 28 kDa ribonucleoprotein, chloroplastic (Nicotiana sylvestris (Wood tobacco)).